Here is a 295-residue protein sequence, read N- to C-terminus: 4-hydroxy-tetrahydrodipicolinate synthase (295 aa).

Residue Thr-45 participates in pyruvate binding. The active-site Proton donor/acceptor is Tyr-131. Lys-159 (schiff-base intermediate with substrate) is an active-site residue. Val-202 contributes to the pyruvate binding site.

Belongs to the DapA family. Homotetramer; dimer of dimers.

Its subcellular location is the cytoplasm. It carries out the reaction L-aspartate 4-semialdehyde + pyruvate = (2S,4S)-4-hydroxy-2,3,4,5-tetrahydrodipicolinate + H2O + H(+). The protein operates within amino-acid biosynthesis; L-lysine biosynthesis via DAP pathway; (S)-tetrahydrodipicolinate from L-aspartate: step 3/4. In terms of biological role, catalyzes the condensation of (S)-aspartate-beta-semialdehyde [(S)-ASA] and pyruvate to 4-hydroxy-tetrahydrodipicolinate (HTPA). In Methanothrix thermoacetophila (strain DSM 6194 / JCM 14653 / NBRC 101360 / PT) (Methanosaeta thermophila), this protein is 4-hydroxy-tetrahydrodipicolinate synthase.